We begin with the raw amino-acid sequence, 1013 residues long: Mediator of RNA polymerase II transcription subunit 5 (1013 aa).

Belongs to the Mediator complex subunit 5 family. In terms of assembly, component of the Mediator complex.

It is found in the nucleus. Its function is as follows. Component of the Mediator complex, a coactivator involved in the regulated transcription of nearly all RNA polymerase II-dependent genes. Mediator functions as a bridge to convey information from gene-specific regulatory proteins to the basal RNA polymerase II transcription machinery. Mediator is recruited to promoters by direct interactions with regulatory proteins and serves as a scaffold for the assembly of a functional preinitiation complex with RNA polymerase II and the general transcription factors. The protein is Mediator of RNA polymerase II transcription subunit 5 (NUT1) of Aspergillus oryzae (strain ATCC 42149 / RIB 40) (Yellow koji mold).